A 549-amino-acid chain; its full sequence is Pyrophosphate--fructose 6-phosphate 1-phosphotransferase (549 aa).

Residue Gly78 participates in diphosphate binding. Asp172 contacts Mg(2+). Residues 200–202 (TID), 239–240 (KY), 247–249 (MGR), Glu308, and 421–424 (YEGR) contribute to the substrate site. The active-site Proton acceptor is the Asp202.

This sequence belongs to the phosphofructokinase type A (PFKA) family. PPi-dependent PFK group II subfamily. Clade 'Long' sub-subfamily. In terms of assembly, homodimer. Mg(2+) is required as a cofactor.

The protein resides in the cytoplasm. The enzyme catalyses beta-D-fructose 6-phosphate + diphosphate = beta-D-fructose 1,6-bisphosphate + phosphate + H(+). Its pathway is carbohydrate degradation; glycolysis; D-glyceraldehyde 3-phosphate and glycerone phosphate from D-glucose: step 3/4. Non-allosteric. Functionally, catalyzes the phosphorylation of D-fructose 6-phosphate, the first committing step of glycolysis. Uses inorganic phosphate (PPi) as phosphoryl donor instead of ATP like common ATP-dependent phosphofructokinases (ATP-PFKs), which renders the reaction reversible, and can thus function both in glycolysis and gluconeogenesis. Consistently, PPi-PFK can replace the enzymes of both the forward (ATP-PFK) and reverse (fructose-bisphosphatase (FBPase)) reactions. This is Pyrophosphate--fructose 6-phosphate 1-phosphotransferase from Porphyromonas gingivalis (Bacteroides gingivalis).